A 286-amino-acid chain; its full sequence is Polyamine aminopropyltransferase (286 aa).

The 234-residue stretch at Lys5–Asn238 folds into the PABS domain. Spermidine contacts are provided by His64 and Asp88. Residues Glu108 and Asp140 to Gly141 contribute to the S-methyl-5'-thioadenosine site. Asp158 acts as the Proton acceptor in catalysis. Asp158–Asp161 serves as a coordination point for spermidine.

The protein belongs to the spermidine/spermine synthase family. Homodimer or homotetramer.

Its subcellular location is the cytoplasm. The enzyme catalyses S-adenosyl 3-(methylsulfanyl)propylamine + putrescine = S-methyl-5'-thioadenosine + spermidine + H(+). Its pathway is amine and polyamine biosynthesis; spermidine biosynthesis; spermidine from putrescine: step 1/1. Functionally, catalyzes the irreversible transfer of a propylamine group from the amino donor S-adenosylmethioninamine (decarboxy-AdoMet) to putrescine (1,4-diaminobutane) to yield spermidine. This is Polyamine aminopropyltransferase from Buchnera aphidicola subsp. Acyrthosiphon pisum (strain 5A).